The following is a 632-amino-acid chain: Golgin subfamily A member 8H (632 aa).

Positions 1–77 (MAEETQHNKL…SSATLKDLES (77 aa)) are disordered. 2 coiled-coil regions span residues 110-201 (VEHQ…LSSR) and 240-468 (ECAE…EKAD). 2 stretches are compositionally biased toward basic and acidic residues: residues 352 to 362 (KQEERIQEQHK) and 427 to 440 (HGGE…EEAP). Disordered regions lie at residues 352–379 (KQEE…EPNN), 423–452 (PGEG…DPES), and 496–524 (LSEP…DEGE). The span at 508 to 520 (LGGGHHQAGAQGG) shows a compositional bias: gly residues.

Belongs to the GOLGA8 family.

The polypeptide is Golgin subfamily A member 8H (GOLGA8H) (Homo sapiens (Human)).